The primary structure comprises 263 residues: MLTKRIIPCLDVQNGRVVKNVRFFENHRDAGDPLALAQLYEAQQADELVFYDITATHEGRQLLLDVAARVAEQVMMPLTVGGGVNAVSDFRQLLLAGADKISVNSGAVRRPELIREASDHFGAQCVVLSIDAKRRPGSEGWTVHVGGGRVDTGLDLIEWAQQGQALGAGEICLNVMDADGTRAGFDLEATRAVASAVDLPVIASGGAGRLEDFRDVLLDGETGGRADAALAASVFHFGELTVPQVKTYLRGEGLPVRPEWREA.

Active-site residues include Asp-11 and Asp-131.

It belongs to the HisA/HisF family. As to quaternary structure, heterodimer of HisH and HisF.

It localises to the cytoplasm. The catalysed reaction is 5-[(5-phospho-1-deoxy-D-ribulos-1-ylimino)methylamino]-1-(5-phospho-beta-D-ribosyl)imidazole-4-carboxamide + L-glutamine = D-erythro-1-(imidazol-4-yl)glycerol 3-phosphate + 5-amino-1-(5-phospho-beta-D-ribosyl)imidazole-4-carboxamide + L-glutamate + H(+). Its pathway is amino-acid biosynthesis; L-histidine biosynthesis; L-histidine from 5-phospho-alpha-D-ribose 1-diphosphate: step 5/9. IGPS catalyzes the conversion of PRFAR and glutamine to IGP, AICAR and glutamate. The HisF subunit catalyzes the cyclization activity that produces IGP and AICAR from PRFAR using the ammonia provided by the HisH subunit. This Deinococcus geothermalis (strain DSM 11300 / CIP 105573 / AG-3a) protein is Imidazole glycerol phosphate synthase subunit HisF.